Consider the following 151-residue polypeptide: Myosin light polypeptide 6 (151 aa).

The residue at position 2 (Cys-2) is an N-acetylcysteine. EF-hand domains are found at residues 7–42 (EQTAEFKEAFQLFDRTGDGKILYSQCGDVMRALGQN), 84–119 (GCFEDYVEGLRVFDKEGNGTVMGAEIRHVLVTLGEK), and 119–151 (KMTEEEVEQLVAGHEDSNGCINYEELVRMVLSG).

Myosin is a hexamer of 2 heavy chains and 4 light chains.

Functionally, regulatory light chain of myosin. Does not bind calcium. This Gallus gallus (Chicken) protein is Myosin light polypeptide 6 (MYL6).